Consider the following 186-residue polypeptide: Peptidyl-tRNA hydrolase (186 aa).

TRNA is bound at residue Y15. The active-site Proton acceptor is the H20. Y64, N66, and N112 together coordinate tRNA.

It belongs to the PTH family. Monomer.

The protein resides in the cytoplasm. It carries out the reaction an N-acyl-L-alpha-aminoacyl-tRNA + H2O = an N-acyl-L-amino acid + a tRNA + H(+). Hydrolyzes ribosome-free peptidyl-tRNAs (with 1 or more amino acids incorporated), which drop off the ribosome during protein synthesis, or as a result of ribosome stalling. Its function is as follows. Catalyzes the release of premature peptidyl moieties from peptidyl-tRNA molecules trapped in stalled 50S ribosomal subunits, and thus maintains levels of free tRNAs and 50S ribosomes. In Azobacteroides pseudotrichonymphae genomovar. CFP2, this protein is Peptidyl-tRNA hydrolase.